A 179-amino-acid chain; its full sequence is UPF0398 protein Bsph_0756 (179 aa).

Belongs to the UPF0398 family.

The protein is UPF0398 protein Bsph_0756 of Lysinibacillus sphaericus (strain C3-41).